A 414-amino-acid polypeptide reads, in one-letter code: Phospholipid-transporting ATPase accessory subunit LEM3 (414 aa).

A required for localization to the plasma membrane region spans residues 1-50 (MVNFDLGQVGEVFRRKDKGAIVSGDNPEEEEDVDASEFEEDEVKPVRTKN). Residues 1–74 (MVNFDLGQVG…AINPVLTPRT (74 aa)) lie on the Cytoplasmic side of the membrane. Residues 20–52 (AIVSGDNPEEEEDVDASEFEEDEVKPVRTKNRR) are disordered. Positions 26-42 (NPEEEEDVDASEFEEDE) are enriched in acidic residues. Ser-36 is modified (phosphoserine). A helical membrane pass occupies residues 75 to 95 (VLPLYLLIAVVFVIVGGCILA). The Extracellular portion of the chain corresponds to 96 to 372 (QNSKVDEVTI…HGSHLGGRNP (277 aa)). 2 disulfide bridges follow: Cys-110-Cys-159 and Cys-216-Cys-231. A glycan (N-linked (GlcNAc...) asparagine) is linked at Asn-113. Asn-240, Asn-256, Asn-279, Asn-298, and Asn-332 each carry an N-linked (GlcNAc...) asparagine glycan. Residues 373 to 393 (FLGIVYLIGGCICAAMALILL) form a helical membrane-spanning segment. Over 394 to 414 (TFWLFGGRKIADASSLSWNMK) the chain is Cytoplasmic. The required for localization to the plasma membrane stretch occupies residues 400–414 (GRKIADASSLSWNMK).

This sequence belongs to the CDC50/LEM3 family. Component of a flippase complex consisting of DNF1 or DNF2 and LEM3. Interacts with DNF1; the interaction is direct and required for their mutual export from the endoplasmic reticulum. Interacts with DNF2; the interaction is direct and required for their mutual export from the endoplasmic reticulum.

It localises to the cell membrane. Accessory component of a P4-ATPase flippase complex which catalyzes the hydrolysis of ATP coupled to the transport of glucosylceramide, phosphatidylcholine, phosphatidylethanolamine, and small amounts of phosphatidylserine from the lumenal to the cytosolic leaflet of the cell membrane and ensures the maintenance of asymmetric distribution of phospholipids. Contributes to substrate binding and specificity of the P4-ATPase catalytic subunit. This Saccharomyces cerevisiae (strain ATCC 204508 / S288c) (Baker's yeast) protein is Phospholipid-transporting ATPase accessory subunit LEM3.